The chain runs to 373 residues: Chorismate synthase (373 aa).

Arg-46 contributes to the NADP(+) binding site. FMN contacts are provided by residues 123–125, 251–252, Gly-295, 310–314, and Arg-337; these read RSS, NA, and KPTPS.

Belongs to the chorismate synthase family. FMNH2 serves as cofactor.

The catalysed reaction is 5-O-(1-carboxyvinyl)-3-phosphoshikimate = chorismate + phosphate. It functions in the pathway metabolic intermediate biosynthesis; chorismate biosynthesis; chorismate from D-erythrose 4-phosphate and phosphoenolpyruvate: step 7/7. Catalyzes the anti-1,4-elimination of the C-3 phosphate and the C-6 proR hydrogen from 5-enolpyruvylshikimate-3-phosphate (EPSP) to yield chorismate, which is the branch point compound that serves as the starting substrate for the three terminal pathways of aromatic amino acid biosynthesis. This reaction introduces a second double bond into the aromatic ring system. The protein is Chorismate synthase of Methanococcus maripaludis (strain C7 / ATCC BAA-1331).